We begin with the raw amino-acid sequence, 434 residues long: CC-adding tRNA nucleotidyltransferase (434 aa).

CTP is bound at residue 19 to 22 (GAVR). Residues aspartate 32 and aspartate 34 each contribute to the Mg(2+) site. CTP-binding positions include 90 to 91 (RD), asparagine 95, 130 to 139 (DHLRSLRGVR), and arginine 175.

The protein belongs to the tRNA nucleotidyltransferase/poly(A) polymerase family. It depends on Mg(2+) as a cofactor.

It carries out the reaction a tRNA precursor + 2 CTP = a tRNA with a 3' CC end + 2 diphosphate. Its function is as follows. tRNA nucleotidyltransferase involved in the synthesis of the tRNA CCA terminus. Adds the two cytidine residues to tRNA. The chain is CC-adding tRNA nucleotidyltransferase from Thermus thermophilus (strain ATCC BAA-163 / DSM 7039 / HB27).